The sequence spans 240 residues: Ubiquinone biosynthesis O-methyltransferase (240 aa).

Residues arginine 44, glycine 64, aspartate 85, and methionine 129 each coordinate S-adenosyl-L-methionine.

Belongs to the methyltransferase superfamily. UbiG/COQ3 family.

The enzyme catalyses a 3-demethylubiquinol + S-adenosyl-L-methionine = a ubiquinol + S-adenosyl-L-homocysteine + H(+). The catalysed reaction is a 3-(all-trans-polyprenyl)benzene-1,2-diol + S-adenosyl-L-methionine = a 2-methoxy-6-(all-trans-polyprenyl)phenol + S-adenosyl-L-homocysteine + H(+). The protein operates within cofactor biosynthesis; ubiquinone biosynthesis. Its function is as follows. O-methyltransferase that catalyzes the 2 O-methylation steps in the ubiquinone biosynthetic pathway. In Escherichia coli (strain UTI89 / UPEC), this protein is Ubiquinone biosynthesis O-methyltransferase.